Here is an 89-residue protein sequence, read N- to C-terminus: Small ribosomal subunit protein uS14B (89 aa).

The interval 38–61 (KLPKDAHPSRLKLRDQTDGRPRGY) is disordered. Basic and acidic residues predominate over residues 39–58 (LPKDAHPSRLKLRDQTDGRP).

Belongs to the universal ribosomal protein uS14 family. In terms of assembly, part of the 30S ribosomal subunit. Contacts proteins S3 and S10.

Its function is as follows. Binds 16S rRNA, required for the assembly of 30S particles and may also be responsible for determining the conformation of the 16S rRNA at the A site. In Enterococcus faecalis (strain ATCC 700802 / V583), this protein is Small ribosomal subunit protein uS14B.